A 456-amino-acid chain; its full sequence is Adenylosuccinate synthetase isozyme 1 (456 aa).

The disordered stretch occupies residues 1–30 (MSSGWSQNDHRSYSNPPPVSGKRPRNDSGN). GTP is bound by residues 41 to 47 (GDEGKGK) and 69 to 71 (GHT). The Proton acceptor role is filled by aspartate 42. Mg(2+) contacts are provided by aspartate 42 and glycine 69. Aspartate 42 serves as a coordination point for substrate. IMP contacts are provided by residues 42 to 45 (DEGK) and 67 to 70 (NAGH). Histidine 70 serves as the catalytic Proton donor. A Phosphoserine modification is found at serine 130. IMP is bound by residues threonine 162, arginine 176, asparagine 255, threonine 270, and arginine 334. 330–336 (VTTGRKR) contributes to the substrate binding site. Residues arginine 336, 362–364 (KLD), and 444–447 (GVGK) each bind GTP.

It belongs to the adenylosuccinate synthetase family. Homodimer. It depends on Mg(2+) as a cofactor.

The protein localises to the cytoplasm. It carries out the reaction IMP + L-aspartate + GTP = N(6)-(1,2-dicarboxyethyl)-AMP + GDP + phosphate + 2 H(+). The protein operates within purine metabolism; AMP biosynthesis via de novo pathway; AMP from IMP: step 1/2. In terms of biological role, component of the purine nucleotide cycle (PNC), which interconverts IMP and AMP to regulate the nucleotide levels in various tissues, and which contributes to glycolysis and ammoniagenesis. Catalyzes the first committed step in the biosynthesis of AMP from IMP. The polypeptide is Adenylosuccinate synthetase isozyme 1 (adss1) (Danio rerio (Zebrafish)).